Reading from the N-terminus, the 201-residue chain is Pyridoxal 5'-phosphate synthase subunit PdxT (201 aa).

Gly-50–Ser-52 contacts L-glutamine. Catalysis depends on Cys-82, which acts as the Nucleophile. L-glutamine is bound by residues Arg-115 and Ile-143–Arg-144. Residues His-179 and Glu-181 each act as charge relay system in the active site.

It belongs to the glutaminase PdxT/SNO family. In the presence of PdxS, forms a dodecamer of heterodimers. Only shows activity in the heterodimer.

It carries out the reaction aldehydo-D-ribose 5-phosphate + D-glyceraldehyde 3-phosphate + L-glutamine = pyridoxal 5'-phosphate + L-glutamate + phosphate + 3 H2O + H(+). The catalysed reaction is L-glutamine + H2O = L-glutamate + NH4(+). It participates in cofactor biosynthesis; pyridoxal 5'-phosphate biosynthesis. Functionally, catalyzes the hydrolysis of glutamine to glutamate and ammonia as part of the biosynthesis of pyridoxal 5'-phosphate. The resulting ammonia molecule is channeled to the active site of PdxS. This Deinococcus geothermalis (strain DSM 11300 / CIP 105573 / AG-3a) protein is Pyridoxal 5'-phosphate synthase subunit PdxT.